Reading from the N-terminus, the 917-residue chain is Isoleucine--tRNA ligase (917 aa).

Positions 57–67 (PYANGNLHMGH) match the 'HIGH' region motif. Glu554 is an L-isoleucyl-5'-AMP binding site. Residues 595–599 (KMSKS) carry the 'KMSKS' region motif. Lys598 contributes to the ATP binding site. Zn(2+) is bound by residues Cys886, Cys889, Cys906, and Cys909.

This sequence belongs to the class-I aminoacyl-tRNA synthetase family. IleS type 1 subfamily. As to quaternary structure, monomer. Zn(2+) serves as cofactor.

Its subcellular location is the cytoplasm. It catalyses the reaction tRNA(Ile) + L-isoleucine + ATP = L-isoleucyl-tRNA(Ile) + AMP + diphosphate. Functionally, catalyzes the attachment of isoleucine to tRNA(Ile). As IleRS can inadvertently accommodate and process structurally similar amino acids such as valine, to avoid such errors it has two additional distinct tRNA(Ile)-dependent editing activities. One activity is designated as 'pretransfer' editing and involves the hydrolysis of activated Val-AMP. The other activity is designated 'posttransfer' editing and involves deacylation of mischarged Val-tRNA(Ile). The chain is Isoleucine--tRNA ligase from Staphylococcus aureus (strain Mu3 / ATCC 700698).